Reading from the N-terminus, the 223-residue chain is MRIRRREEKENQEYKKGLWTVEEDNILMDYVLNHGTGQWNRIVRKTGLKRCGKSCRLRWMNYLSPNVNKGNFTEQEEDLIIRLHKLLGNRWSLIAKRVPGRTDNQVKNYWNTHLSKKLVGDYSSAVKTTGEDDDSLPSLFITAATTSCHHQQENVYENIAKRFDGVVSASYEDKPKQELAQNDVLMATTNDPSHYYGNNALWVHDDDFELSSLFTRNDEFCFW.

2 consecutive HTH myb-type domains span residues 11 to 63 (NQEY…MNYL) and 64 to 118 (SPNV…SKKL). DNA-binding regions (H-T-H motif) lie at residues 39–63 (WNRIVRKTGLKRCGKSCRLRWMNYL) and 91–114 (WSLIAKRVPGRTDNQVKNYWNTHL).

It is found in the nucleus. Regulates the production of a signal that induces hair (trichome) precursor cells on leaf primordia to differentiate. The chain is Trichome differentiation protein GL1 (GL1) from Arabidopsis lyrata (Lyre-leaved rock-cress).